We begin with the raw amino-acid sequence, 432 residues long: Serine--tRNA ligase (432 aa).

239-241 (TSE) provides a ligand contact to L-serine. 270–272 (RSE) serves as a coordination point for ATP. Residue glutamate 293 participates in L-serine binding. 357-360 (EISS) is a binding site for ATP. L-serine is bound at residue serine 392.

It belongs to the class-II aminoacyl-tRNA synthetase family. Type-1 seryl-tRNA synthetase subfamily. Homodimer. The tRNA molecule binds across the dimer.

The protein resides in the cytoplasm. It carries out the reaction tRNA(Ser) + L-serine + ATP = L-seryl-tRNA(Ser) + AMP + diphosphate + H(+). The catalysed reaction is tRNA(Sec) + L-serine + ATP = L-seryl-tRNA(Sec) + AMP + diphosphate + H(+). It participates in aminoacyl-tRNA biosynthesis; selenocysteinyl-tRNA(Sec) biosynthesis; L-seryl-tRNA(Sec) from L-serine and tRNA(Sec): step 1/1. Catalyzes the attachment of serine to tRNA(Ser). Is also able to aminoacylate tRNA(Sec) with serine, to form the misacylated tRNA L-seryl-tRNA(Sec), which will be further converted into selenocysteinyl-tRNA(Sec). The sequence is that of Serine--tRNA ligase from Methylibium petroleiphilum (strain ATCC BAA-1232 / LMG 22953 / PM1).